Reading from the N-terminus, the 390-residue chain is Probable NADH-dependent butanol dehydrogenase 2 (390 aa).

This sequence belongs to the iron-containing alcohol dehydrogenase family.

It participates in alcohol metabolism; butanol biosynthesis. The polypeptide is Probable NADH-dependent butanol dehydrogenase 2 (yugK) (Bacillus subtilis (strain 168)).